Here is a 140-residue protein sequence, read N- to C-terminus: Transcription antitermination protein NusB (140 aa).

The protein belongs to the NusB family.

Involved in transcription antitermination. Required for transcription of ribosomal RNA (rRNA) genes. Binds specifically to the boxA antiterminator sequence of the ribosomal RNA (rrn) operons. This Streptococcus pneumoniae (strain JJA) protein is Transcription antitermination protein NusB.